Consider the following 556-residue polypeptide: MGNSCRGSFKDKLDEGDNNKPEDYSKTSTTNLSSNSDHSPNAADIIAQEFSKDNNSNNNSKDPALVIPLREPIMRRNPDNQAYYVLGHKTPNIRDIYTLSRKLGQGQFGTTYLCTEIASGVDYACKSISKRKLISKEDVEDVRREIQIMHHLAGHGSIVTIKGAYEDSLYVHIVMELCAGGELFDRIIQRGHYSERKAAELTKIIVGVVEACHSLGVMHRDLKPENFLLVNKDDDFSLKAIDFGLSVFFKPGQIFTDVVGSPYYVAPEVLLKRYGPEADVWTAGVILYILLSGVPPFWAETQQGIFDAVLKGYIDFESDPWPVISDSAKDLIRRMLSSKPAERLTAHEVLRHPWICENGVAPDRALDPAVLSRLKQFSAMNKLKKMALKVIAESLSEEEIAGLREMFQAMDTDNSGAITFDELKAGLRKYGSTLKDTEIHDLMDAADVDNSGTIDYSEFIAATIHLNKLEREEHLVAAFQYFDKDGSGFITIDELQQACVEHGMADVFLEDIIKEVDQNNDGKIDYGEFVEMMQKGNAGVGRRTMRNSLNISMRDA.

Positions 1–40 are disordered; sequence MGNSCRGSFKDKLDEGDNNKPEDYSKTSTTNLSSNSDHSP. Residue Gly2 is the site of N-myristoyl glycine attachment. Residues 8–25 show a composition bias toward basic and acidic residues; that stretch reads SFKDKLDEGDNNKPEDYS. Over residues 26 to 39 the composition is skewed to low complexity; sequence KTSTTNLSSNSDHS. The Protein kinase domain occupies 97-355; that stretch reads YTLSRKLGQG…AHEVLRHPWI (259 aa). Residues 103-111 and Lys126 contribute to the ATP site; that span reads LGQGQFGTT. Asp221 functions as the Proton acceptor in the catalytic mechanism. Ser261 is modified (phosphoserine). The segment at 361-391 is autoinhibitory domain; sequence APDRALDPAVLSRLKQFSAMNKLKKMALKVI. EF-hand domains lie at 398–433, 434–469, 470–505, and 509–539; these read EEIA…YGST, LKDT…LNKL, EREE…HGMA, and LEDI…GNAG. Residues Asp411, Asp413, Ser415, Glu422, Asp447, Asp449, Ser451, Thr453, Glu458, Asp483, Asp485, Ser487, Glu494, Asp517, Asn519, Asp521, Lys523, and Glu528 each contribute to the Ca(2+) site.

This sequence belongs to the protein kinase superfamily. Ser/Thr protein kinase family. CDPK subfamily.

Its subcellular location is the membrane. The enzyme catalyses L-seryl-[protein] + ATP = O-phospho-L-seryl-[protein] + ADP + H(+). It catalyses the reaction L-threonyl-[protein] + ATP = O-phospho-L-threonyl-[protein] + ADP + H(+). With respect to regulation, activated by calcium. Autophosphorylation may play an important role in the regulation of the kinase activity. Functionally, may play a role in signal transduction pathways that involve calcium as a second messenger. The chain is Calcium-dependent protein kinase 5 (CPK5) from Arabidopsis thaliana (Mouse-ear cress).